The sequence spans 599 residues: NADH-quinone oxidoreductase subunit C/D (599 aa).

The interval 1 to 189 (MTDLTTHDLA…DPFVLTKQKE (189 aa)) is NADH dehydrogenase I subunit C. Residues 213 to 599 (DFMFLNLGPN…IDFVMSDVDR (387 aa)) are NADH dehydrogenase I subunit D.

It in the N-terminal section; belongs to the complex I 30 kDa subunit family. The protein in the C-terminal section; belongs to the complex I 49 kDa subunit family. As to quaternary structure, NDH-1 is composed of 13 different subunits. Subunits NuoB, CD, E, F, and G constitute the peripheral sector of the complex.

The protein localises to the cell inner membrane. The enzyme catalyses a quinone + NADH + 5 H(+)(in) = a quinol + NAD(+) + 4 H(+)(out). In terms of biological role, NDH-1 shuttles electrons from NADH, via FMN and iron-sulfur (Fe-S) centers, to quinones in the respiratory chain. The immediate electron acceptor for the enzyme in this species is believed to be ubiquinone. Couples the redox reaction to proton translocation (for every two electrons transferred, four hydrogen ions are translocated across the cytoplasmic membrane), and thus conserves the redox energy in a proton gradient. The polypeptide is NADH-quinone oxidoreductase subunit C/D (Pectobacterium carotovorum subsp. carotovorum (strain PC1)).